A 785-amino-acid polypeptide reads, in one-letter code: Cation/H(+) antiporter 1 (785 aa).

A run of 12 helical transmembrane segments spans residues 19 to 39, 44 to 64, 79 to 99, 112 to 132, 143 to 163, 179 to 199, 201 to 221, 240 to 260, 294 to 314, 323 to 343, 352 to 372, and 389 to 409; these read LNTMFIQMACILVFSQFFYLF, GQAGPVAQILAGIVLSLLTII, YYIFFSFLLRTAFVFLIGLEI, IVITLGSLVISGIIWLPFLWF, FLTFYLAFLITLSNTAAPVVI, LAISCGLFIEITNIFIYTIVL, FISGTMTADIFIYSFATGVII, YLSKAETLAFIILILIIALTI, YPIHEFVLPVYFGYIGFRFSV, LVLGMTVALSLLGKLLGVLFA, QYWLFLSTMLSVKGHIGLVLL, and MFVAALVIMTLLSGVITSLLL.

Belongs to the monovalent cation:proton antiporter 2 (CPA2) transporter (TC 2.A.37) family. CHX (TC 2.A.37.4) subfamily. As to expression, specifically expressed in pollen.

Its subcellular location is the membrane. May operate as a cation/H(+) antiporter. The chain is Cation/H(+) antiporter 1 (CHX1) from Arabidopsis thaliana (Mouse-ear cress).